Here is a 491-residue protein sequence, read N- to C-terminus: Cholesterol 22-monohydroxylase CYP90B51 (491 aa).

The helical transmembrane segment at 6–26 (ITFYCLSSILSVLLIFIFILI) threads the bilayer. Heme is bound at residue Cys-437.

It belongs to the cytochrome P450 family. As to expression, mainly expressed in leaves and seed pods and, to a lower extent, in flowers and stems.

Its subcellular location is the membrane. The catalysed reaction is cholesterol + reduced [NADPH--hemoprotein reductase] + O2 = (22S)-22-hydroxycholesterol + oxidized [NADPH--hemoprotein reductase] + H2O + H(+). It functions in the pathway steroid metabolism; cholesterol metabolism. In terms of biological role, canonical brassinosteroid (BR)-biosynthetic enzyme capable of converting cholesterol to 22S-hydroxycholesterol via sterol-C22 hydroxylation. In Trigonella foenum-graecum (Fenugreek), this protein is Cholesterol 22-monohydroxylase CYP90B51.